Reading from the N-terminus, the 375-residue chain is tRNA-specific 2-thiouridylase MnmA (375 aa).

Residues 12-19 and methionine 38 contribute to the ATP site; that span reads GMSGGVDS. An interaction with target base in tRNA region spans residues 98-100; it reads NPD. Cysteine 103 acts as the Nucleophile in catalysis. A disulfide bridge links cysteine 103 with cysteine 200. Glycine 127 is a binding site for ATP. The tract at residues 150–152 is interaction with tRNA; it reads KDQ. The Cysteine persulfide intermediate role is filled by cysteine 200. Residues 312-313 are interaction with tRNA; sequence RY.

Belongs to the MnmA/TRMU family.

The protein resides in the cytoplasm. It catalyses the reaction S-sulfanyl-L-cysteinyl-[protein] + uridine(34) in tRNA + AH2 + ATP = 2-thiouridine(34) in tRNA + L-cysteinyl-[protein] + A + AMP + diphosphate + H(+). Catalyzes the 2-thiolation of uridine at the wobble position (U34) of tRNA, leading to the formation of s(2)U34. In Lactobacillus delbrueckii subsp. bulgaricus (strain ATCC BAA-365 / Lb-18), this protein is tRNA-specific 2-thiouridylase MnmA.